A 602-amino-acid polypeptide reads, in one-letter code: Proteasome-associated ATPase (602 aa).

The stretch at 13–89 forms a coiled coil; the sequence is PDAAEVERLR…LREEVDRLGQ (77 aa). An ATP-binding site is contributed by 289-294; sequence GCGKTL. The segment at 601-602 is docks into pockets in the proteasome alpha-ring; it reads YL.

This sequence belongs to the AAA ATPase family. As to quaternary structure, homohexamer. Assembles into a hexameric ring structure that caps the 20S proteasome core. Strongly interacts with the prokaryotic ubiquitin-like protein Pup through a hydrophobic interface; the interacting region of ARC lies in its N-terminal coiled-coil domain. There is one Pup binding site per ARC hexamer ring. Upon ATP-binding, the C-terminus of ARC interacts with the alpha-rings of the proteasome core, possibly by binding to the intersubunit pockets.

It functions in the pathway protein degradation; proteasomal Pup-dependent pathway. ATPase which is responsible for recognizing, binding, unfolding and translocation of pupylated proteins into the bacterial 20S proteasome core particle. May be essential for opening the gate of the 20S proteasome via an interaction with its C-terminus, thereby allowing substrate entry and access to the site of proteolysis. Thus, the C-termini of the proteasomal ATPase may function like a 'key in a lock' to induce gate opening and therefore regulate proteolysis. The polypeptide is Proteasome-associated ATPase (Mycobacteroides abscessus (strain ATCC 19977 / DSM 44196 / CCUG 20993 / CIP 104536 / JCM 13569 / NCTC 13031 / TMC 1543 / L948) (Mycobacterium abscessus)).